Reading from the N-terminus, the 483-residue chain is ATP synthase subunit beta (483 aa).

162 to 169 (GGAGVGKT) is an ATP binding site.

It belongs to the ATPase alpha/beta chains family. As to quaternary structure, F-type ATPases have 2 components, CF(1) - the catalytic core - and CF(0) - the membrane proton channel. CF(1) has five subunits: alpha(3), beta(3), gamma(1), delta(1), epsilon(1). CF(0) has four main subunits: a(1), b(1), b'(1) and c(9-12).

The protein resides in the cellular thylakoid membrane. It carries out the reaction ATP + H2O + 4 H(+)(in) = ADP + phosphate + 5 H(+)(out). Functionally, produces ATP from ADP in the presence of a proton gradient across the membrane. The catalytic sites are hosted primarily by the beta subunits. This chain is ATP synthase subunit beta, found in Synechocystis sp. (strain ATCC 27184 / PCC 6803 / Kazusa).